The primary structure comprises 1306 residues: Putative late blight resistance protein homolog R1A-10 (1306 aa).

Coiled coils occupy residues 407 to 428 and 520 to 542; these read SDSLAFLKNQLQVIQTEFESLQ and PRMKEEIVGFEDVIENLRKKLLS. The 288-residue stretch at 521–808 folds into the NB-ARC domain; the sequence is RMKEEIVGFE…SEAFIKSSEG (288 aa). 554-561 serves as a coordination point for ATP; that stretch reads GMPGLGKT. 11 LRR repeats span residues 858 to 881, 921 to 935, 936 to 961, 979 to 1007, 1010 to 1035, 1057 to 1081, 1082 to 1106, 1110 to 1129, 1130 to 1153, 1156 to 1181, and 1216 to 1240; these read AEENFLLWINRDQITKPSSCVYSH, LSSLHDFSISRILPN, FKFLKVLDLEHRVFIDFIPTELPYLR, LWNLETLILNRRSADSHNRVLLPSTVWDM, LRHLHIPNFSPENKKALLKNSPNLDD, TPNLRKLTCKVKCLEYLHQYHALNF, PIRLEILKLYRSNAFKAIPFCISAP, YLKLSGFYLDSQYLSKTADH, LKNLEVLKLYYVEFGDHREWKVSN, FPQLKILKLEDVSLMKWIVADDAFPN, and ESVVKSAMNIQETQVEDYQNTNFKL. The 67-residue stretch at 1240-1306 folds into the HMA domain; that stretch reads LVLIEKWPKF…KLRKCGMPGL (67 aa).

The protein belongs to the disease resistance NB-LRR family.

It is found in the cytoplasm. Its subcellular location is the membrane. In terms of biological role, confers resistance to late blight (Phytophthora infestans) races carrying the avirulence gene Avr1. Resistance proteins guard the plant against pathogens that contain an appropriate avirulence protein via an indirect interaction with this avirulence protein. That triggers a defense system including the hypersensitive response, which restricts the pathogen growth. The sequence is that of Putative late blight resistance protein homolog R1A-10 (R1A-10) from Solanum demissum (Wild potato).